The primary structure comprises 81 residues: MDSITSAASVVAAGLAVGLGAIGPGLGQGNAAQGAVEGIARQPEAEGKIRGTLLLSFAFMESLTIYGLVVALVLLFANPFS.

2 consecutive transmembrane segments (helical) span residues 7-27 and 57-77; these read AASV…PGLG and FAFM…LLFA.

Belongs to the ATPase C chain family. As to quaternary structure, F-type ATPases have 2 components, F(1) - the catalytic core - and F(0) - the membrane proton channel. F(1) has five subunits: alpha(3), beta(3), gamma(1), delta(1), epsilon(1). F(0) has four main subunits: a(1), b(1), b'(1) and c(10-14). The alpha and beta chains form an alternating ring which encloses part of the gamma chain. F(1) is attached to F(0) by a central stalk formed by the gamma and epsilon chains, while a peripheral stalk is formed by the delta, b and b' chains.

It is found in the cellular thylakoid membrane. Its function is as follows. F(1)F(0) ATP synthase produces ATP from ADP in the presence of a proton or sodium gradient. F-type ATPases consist of two structural domains, F(1) containing the extramembraneous catalytic core and F(0) containing the membrane proton channel, linked together by a central stalk and a peripheral stalk. During catalysis, ATP synthesis in the catalytic domain of F(1) is coupled via a rotary mechanism of the central stalk subunits to proton translocation. Key component of the F(0) channel; it plays a direct role in translocation across the membrane. A homomeric c-ring of between 10-14 subunits forms the central stalk rotor element with the F(1) delta and epsilon subunits. The protein is ATP synthase subunit c of Prochlorococcus marinus (strain MIT 9301).